An 85-amino-acid polypeptide reads, in one-letter code: uncharacterized protein (85 aa).

This is an uncharacterized protein from Treponema pallidum (strain Nichols).